Reading from the N-terminus, the 99-residue chain is Aspartyl/glutamyl-tRNA(Asn/Gln) amidotransferase subunit C (99 aa).

The protein belongs to the GatC family. Heterotrimer of A, B and C subunits.

It catalyses the reaction L-glutamyl-tRNA(Gln) + L-glutamine + ATP + H2O = L-glutaminyl-tRNA(Gln) + L-glutamate + ADP + phosphate + H(+). The enzyme catalyses L-aspartyl-tRNA(Asn) + L-glutamine + ATP + H2O = L-asparaginyl-tRNA(Asn) + L-glutamate + ADP + phosphate + 2 H(+). Allows the formation of correctly charged Asn-tRNA(Asn) or Gln-tRNA(Gln) through the transamidation of misacylated Asp-tRNA(Asn) or Glu-tRNA(Gln) in organisms which lack either or both of asparaginyl-tRNA or glutaminyl-tRNA synthetases. The reaction takes place in the presence of glutamine and ATP through an activated phospho-Asp-tRNA(Asn) or phospho-Glu-tRNA(Gln). The polypeptide is Aspartyl/glutamyl-tRNA(Asn/Gln) amidotransferase subunit C (Burkholderia ambifaria (strain MC40-6)).